We begin with the raw amino-acid sequence, 214 residues long: Pyridoxine/pyridoxamine 5'-phosphate oxidase (214 aa).

Substrate contacts are provided by residues arginine 8–tyrosine 11 and lysine 66. Residues arginine 61 to lysine 66, phenylalanine 76 to threonine 77, arginine 82, lysine 83, and glutamine 105 each bind FMN. Residues tyrosine 123, arginine 127, and serine 131 each contribute to the substrate site. FMN is bound by residues glutamine 140–serine 141 and tryptophan 184. Position 190–192 (arginine 190–histidine 192) interacts with substrate. Arginine 194 contacts FMN.

This sequence belongs to the pyridoxamine 5'-phosphate oxidase family. In terms of assembly, homodimer. FMN serves as cofactor.

The enzyme catalyses pyridoxamine 5'-phosphate + O2 + H2O = pyridoxal 5'-phosphate + H2O2 + NH4(+). It catalyses the reaction pyridoxine 5'-phosphate + O2 = pyridoxal 5'-phosphate + H2O2. Its pathway is cofactor metabolism; pyridoxal 5'-phosphate salvage; pyridoxal 5'-phosphate from pyridoxamine 5'-phosphate: step 1/1. It functions in the pathway cofactor metabolism; pyridoxal 5'-phosphate salvage; pyridoxal 5'-phosphate from pyridoxine 5'-phosphate: step 1/1. Functionally, catalyzes the oxidation of either pyridoxine 5'-phosphate (PNP) or pyridoxamine 5'-phosphate (PMP) into pyridoxal 5'-phosphate (PLP). This Burkholderia lata (strain ATCC 17760 / DSM 23089 / LMG 22485 / NCIMB 9086 / R18194 / 383) protein is Pyridoxine/pyridoxamine 5'-phosphate oxidase.